A 188-amino-acid chain; its full sequence is Large ribosomal subunit protein eL18 (188 aa).

The disordered stretch occupies residues 153–188; the sequence is GKAPGTPHSHTKPYIRSKGRKFERARGRRASRGYKN. Basic residues-rich tracts occupy residues 161–171 and 178–188; these read SHTKPYIRSKG and RGRRASRGYKN.

The protein belongs to the eukaryotic ribosomal protein eL18 family. Component of the large ribosomal subunit.

The protein resides in the cytoplasm. It localises to the cytosol. It is found in the rough endoplasmic reticulum. Component of the large ribosomal subunit. The ribosome is a large ribonucleoprotein complex responsible for the synthesis of proteins in the cell. The chain is Large ribosomal subunit protein eL18 (rpl18) from Ictalurus punctatus (Channel catfish).